The sequence spans 146 residues: UPF0260 protein Swit_2819 (146 aa).

The protein belongs to the UPF0260 family.

The polypeptide is UPF0260 protein Swit_2819 (Rhizorhabdus wittichii (strain DSM 6014 / CCUG 31198 / JCM 15750 / NBRC 105917 / EY 4224 / RW1) (Sphingomonas wittichii)).